The following is a 244-amino-acid chain: E3 ubiquitin-protein ligase RNF166 (244 aa).

The interval 10–30 (AQRPQAPGPGPPRPPPPAGPA) is disordered. Residues 15-28 (APGPGPPRPPPPAG) are compositionally biased toward pro residues. The RING-type zinc finger occupies 40–80 (CPICLEVFHRAVGIAGCGHTFCGECLQPCLQVPSPLCPLCR). Residues C105, C108, H120, and C124 each contribute to the Zn(2+) site. The C2HC RNF-type zinc-finger motif lies at 105–124 (CRGCSKKVTLAKMRSHVSSC). Positions 228-244 (DEEAALQAALALSLSEN) constitute a UIM domain.

The protein resides in the cytoplasm. The catalysed reaction is S-ubiquitinyl-[E2 ubiquitin-conjugating enzyme]-L-cysteine + [acceptor protein]-L-lysine = [E2 ubiquitin-conjugating enzyme]-L-cysteine + N(6)-ubiquitinyl-[acceptor protein]-L-lysine.. It participates in protein modification; protein ubiquitination. Its function is as follows. E3 ubiquitin-protein ligase that promotes the ubiquitination of different substrates. The polypeptide is E3 ubiquitin-protein ligase RNF166 (RNF166) (Gallus gallus (Chicken)).